We begin with the raw amino-acid sequence, 381 residues long: E3 ubiquitin-protein ligase KCMF1 (381 aa).

Ser2 is modified (N-acetylserine). Ser2 carries the post-translational modification Phosphoserine. The ZZ-type zinc finger occupies 4–60; it reads HEGVSCDACLKGNFRGRRYKCLICYDYDLCASCYESGATTTRHTTDHPMQCILTRVD. Residues Cys9, Cys12, Cys24, Cys27, Cys33, Cys36, His46, and His50 each coordinate Zn(2+). Residues 78–101 form a C2H2-type zinc finger; it reads FTCPYCGKMGYTETSLQEHVTSEH. Residues 154–193 are disordered; the sequence is MFHPGRGLGGPRARRSNMHFTSSSTGGLSSSQSSYSPSNR. A phosphoserine mark is found at Ser169, Ser189, and Ser212. A compositionally biased stretch (low complexity) spans 175-191; sequence SSSTGGLSSSQSSYSPS. Positions 225–257 form a coiled coil; it reads SQLQQLQMQLQLERQHAQAARQQLETARNATRR. The interval 294 to 314 is disordered; the sequence is TRLNDPKMSETERQSMESERA. Over residues 297-314 the composition is skewed to basic and acidic residues; the sequence is NDPKMSETERQSMESERA. Phosphoserine is present on residues Ser335 and Ser336.

It belongs to the KCMF1 family. In terms of assembly, component of the SIFI complex, composed of KCMF1, UBR4 and calmodulin (CALM1, CALM2 or CALM3). As to expression, spleen, small intestine, ovary, peripheral blood, lung, kidney and pancreas. Expressed at low levels in the thymus, prostate, testis, colon, heart, brain, placenta and liver.

It localises to the cytoplasm. The protein resides in the late endosome. The protein localises to the lysosome. It carries out the reaction S-ubiquitinyl-[E2 ubiquitin-conjugating enzyme]-L-cysteine + [acceptor protein]-L-lysine = [E2 ubiquitin-conjugating enzyme]-L-cysteine + N(6)-ubiquitinyl-[acceptor protein]-L-lysine.. It participates in protein modification; protein ubiquitination. In terms of biological role, E3 ubiquitin-protein ligase which accepts ubiquitin from an E2 ubiquitin-conjugating enzyme and then transfers it to targeted substrates, promoting their degradation by the proteasome. Together with UBR4, component of the N-end rule pathway: ubiquitinates proteins bearing specific N-terminal residues that are destabilizing according to the N-end rule, leading to their degradation. Does not ubiquitinate proteins that are acetylated at the N-terminus. Together with UBR4, part of a protein quality control pathway that catalyzes ubiquitination and degradation of proteins that have been oxidized in response to reactive oxygen species (ROS): recognizes proteins with an Arg-CysO3(H) degron at the N-terminus, and mediates assembly of heterotypic 'Lys-63'-/'Lys-27'-linked branched ubiquitin chains on oxidized proteins, leading to their degradation by autophagy. Catalytic component of the SIFI complex, a multiprotein complex required to inhibit the mitochondrial stress response after a specific stress event has been resolved: ubiquitinates and degrades (1) components of the HRI-mediated signaling of the integrated stress response, such as DELE1 and EIF2AK1/HRI, as well as (2) unimported mitochondrial precursors. Within the SIFI complex, UBR4 initiates ubiquitin chain that are further elongated or branched by KCMF1. The chain is E3 ubiquitin-protein ligase KCMF1 from Homo sapiens (Human).